The following is a 209-amino-acid chain: Outer-membrane lipoprotein carrier protein (209 aa).

An N-terminal signal peptide occupies residues 1–21 (MHRQLRYAVLATALFASTAFA).

The protein belongs to the LolA family. Monomer.

The protein localises to the periplasm. In terms of biological role, participates in the translocation of lipoproteins from the inner membrane to the outer membrane. Only forms a complex with a lipoprotein if the residue after the N-terminal Cys is not an aspartate (The Asp acts as a targeting signal to indicate that the lipoprotein should stay in the inner membrane). The protein is Outer-membrane lipoprotein carrier protein of Xanthomonas axonopodis pv. citri (strain 306).